Reading from the N-terminus, the 661-residue chain is UvrABC system protein B (661 aa).

The region spanning 25-182 is the Helicase ATP-binding domain; the sequence is AGLNSKKRSQ…SDLVNLQYER (158 aa). 38–45 contacts ATP; the sequence is GITGSGKT. The Beta-hairpin motif lies at 91–114; that stretch reads YYDYYQPEAYIARTDTFIEKDSSI. Residues 430-592 form the Helicase C-terminal domain; the sequence is QVEDLISEIQ…IIPQTINRTI (163 aa). The UVR domain maps to 621–656; it reads KAHIYKLKKAMLKAASNLEFEQATKLRDQLKNLEEA.

It belongs to the UvrB family. As to quaternary structure, forms a heterotetramer with UvrA during the search for lesions. Interacts with UvrC in an incision complex.

It localises to the cytoplasm. The UvrABC repair system catalyzes the recognition and processing of DNA lesions. A damage recognition complex composed of 2 UvrA and 2 UvrB subunits scans DNA for abnormalities. Upon binding of the UvrA(2)B(2) complex to a putative damaged site, the DNA wraps around one UvrB monomer. DNA wrap is dependent on ATP binding by UvrB and probably causes local melting of the DNA helix, facilitating insertion of UvrB beta-hairpin between the DNA strands. Then UvrB probes one DNA strand for the presence of a lesion. If a lesion is found the UvrA subunits dissociate and the UvrB-DNA preincision complex is formed. This complex is subsequently bound by UvrC and the second UvrB is released. If no lesion is found, the DNA wraps around the other UvrB subunit that will check the other stand for damage. This Rickettsia canadensis (strain McKiel) protein is UvrABC system protein B.